A 241-amino-acid chain; its full sequence is Probable transcriptional regulatory protein LMOf2365_1554 (241 aa).

The segment covering 1 to 14 (MSGHSKWNNIQGRK) has biased composition (polar residues). The segment at 1–22 (MSGHSKWNNIQGRKNAQDSKRS) is disordered.

Belongs to the TACO1 family.

The protein localises to the cytoplasm. The protein is Probable transcriptional regulatory protein LMOf2365_1554 of Listeria monocytogenes serotype 4b (strain F2365).